Consider the following 817-residue polypeptide: Nuclear hormone receptor family member nhr-48 (817 aa).

Residues tyrosine 49–glutamate 91 are disordered. Over residues aspartate 52–glycine 62 the composition is skewed to acidic residues. Gly residues predominate over residues serine 63–lysine 72. A DNA-binding region (nuclear receptor) is located at residues asparagine 97 to serine 172. 2 consecutive NR C4-type zinc fingers follow at residues cysteine 100–cysteine 120 and cysteine 136–cysteine 155. Residues alanine 202 to tyrosine 212 are compositionally biased toward acidic residues. Disordered regions lie at residues alanine 202 to glutamine 221 and methionine 258 to leucine 284. Polar residues predominate over residues leucine 273–leucine 284.

This sequence belongs to the nuclear hormone receptor family.

The protein resides in the nucleus. Functionally, orphan nuclear receptor. This Caenorhabditis elegans protein is Nuclear hormone receptor family member nhr-48 (nhr-48).